Reading from the N-terminus, the 477-residue chain is Ribulose bisphosphate carboxylase large chain (477 aa).

The propeptide occupies 1-2; sequence MS. Position 3 is an N-acetylproline (Pro3). Residue Lys14 is modified to N6,N6,N6-trimethyllysine. Substrate is bound by residues Asn123 and Thr173. Lys175 functions as the Proton acceptor in the catalytic mechanism. Lys177 contacts substrate. The Mg(2+) site is built by Lys201, Asp203, and Glu204. Lys201 carries the post-translational modification N6-carboxylysine. Residue His294 is the Proton acceptor of the active site. Arg295, His327, and Ser379 together coordinate substrate.

It belongs to the RuBisCO large chain family. Type I subfamily. As to quaternary structure, heterohexadecamer of 8 large chains and 8 small chains; disulfide-linked. The disulfide link is formed within the large subunit homodimers. Requires Mg(2+) as cofactor. In terms of processing, the disulfide bond which can form in the large chain dimeric partners within the hexadecamer appears to be associated with oxidative stress and protein turnover.

It is found in the plastid. The protein localises to the chloroplast. The enzyme catalyses 2 (2R)-3-phosphoglycerate + 2 H(+) = D-ribulose 1,5-bisphosphate + CO2 + H2O. It carries out the reaction D-ribulose 1,5-bisphosphate + O2 = 2-phosphoglycolate + (2R)-3-phosphoglycerate + 2 H(+). In terms of biological role, ruBisCO catalyzes two reactions: the carboxylation of D-ribulose 1,5-bisphosphate, the primary event in carbon dioxide fixation, as well as the oxidative fragmentation of the pentose substrate in the photorespiration process. Both reactions occur simultaneously and in competition at the same active site. This Nicotiana debneyi (Debney's tobacco) protein is Ribulose bisphosphate carboxylase large chain.